A 742-amino-acid chain; its full sequence is Non-structural protein 1 (742 aa).

Disordered regions lie at residues S14–A46 and L230–H268. Low complexity-rich tracts occupy residues P20 to A46 and P238 to P258. Positions D635–A700 form a coiled coil.

The protein belongs to the aquareoviridae NS1 protein family.

Non-structural protein with ssRNA-binding activity. Is probably involved in the formation of viral inclusions, where the assembly of cores and the replication of viral RNA are thought to occur. In Aquareovirus C (isolate Golden shiner/USA/GSRV/1977) (AQRV-C), this protein is Non-structural protein 1 (S4).